The following is a 456-amino-acid chain: Alcohol acyltransferase 17 (456 aa).

Residues H166 and D382 each act as proton acceptor in the active site.

This sequence belongs to the plant acyltransferase family. In terms of tissue distribution, expressed in fruit.

Functionally, involved in the biosynthesis of volatile esters which confer kiwifruit flavor. Alcohol acyl transferase that can use a wide range of alcohols as substrate to produce esters. The sequence is that of Alcohol acyltransferase 17 from Actinidia deliciosa (Kiwi).